A 218-amino-acid polypeptide reads, in one-letter code: Ras-related protein RABA5e (218 aa).

19 to 26 contributes to the GTP binding site; it reads GDSAVGKS. Residues 41–49 carry the Effector region motif; it reads SKATIGVEF. Residues 67 to 71, 125 to 128, and 155 to 156 each bind GTP; these read DTAGQ, NKCD, and SA. 2 S-geranylgeranyl cysteine lipidation sites follow: cysteine 214 and cysteine 215. A Cysteine methyl ester modification is found at cysteine 215. A propeptide spans 216–218 (removed in mature form); the sequence is SST.

This sequence belongs to the small GTPase superfamily. Rab family.

It localises to the cell membrane. In terms of biological role, intracellular vesicle trafficking and protein transport. In Arabidopsis thaliana (Mouse-ear cress), this protein is Ras-related protein RABA5e (RABA5E).